Here is a 642-residue protein sequence, read N- to C-terminus: AEKIKICLQKQANSSFSLHNGFGGNLYATEEKRMFELVKPKAGASVLNQSTWIGFGDSRTDKSNSAFPRSADVSAKTADKFRSLSGGSLMLSMFGPPGKVDYLYQGCGKHKVFYEGVNWSPHAAIDCYRKNWTDIKLNFQKNIYELASQSHCMSLVNALDKTIPLQVTAEVAKNCNNSFLKNPALYTQEVNPSKQICGEENLAFFTLPTQFGTYECKLHLVASCYFIYDSKEVYNKRGCDNYFQVIYDSSGKVVGGLDNRVSPYTGNTGDTPTMQCDMLQLKPGRYSVRSSPRFLLMPERSYCFDMKEKGLVTAVQSVWGKGRKSDYAVDQACLSTPGCMLIQKQKPYIGEADDHHGDQEMRELLSGLDYEARCISQSGWVNETSPFTEEYLLPPKFGRCPLAAKEESIPKIPDGLLIPTSGTDTTVTKPKSRIFGNDDLIIGLLFVAIVETGIGGYLLGSRKESGGGVTKESAEKGFEKIGNDIQILRSSTNIAIEKLNDRITHDEQAIRDLTLEIENARSEALLGELGIIRALLVGNISIGLQESLWELASEITNRAGDLAVEVSPGCWIIDNNICDQSCQNFIFKFNETAPVPTIPPLDTKIDLQSDPFYWGSSLGLAITTPISLAALAISGIAICRTK.

A signal peptide is located at residue Ala-1. Residues 2–27 (EKIKICLQKQANSSFSLHNGFGGNLY) form a fusion domain-1 region. Over 2–617 (EKIKICLQKQ…QSDPFYWGSS (616 aa)) the chain is Extracellular. Disulfide bonds link Cys-7-Cys-570, Cys-107-Cys-152, Cys-127-Cys-175, Cys-197-Cys-239, Cys-216-Cys-303, Cys-224-Cys-276, and Cys-333-Cys-339. N-linked (GlcNAc...) asparagine; by host glycosylation is found at Asn-13 and Asn-48. Positions 28–138 (ATEEKRMFEL…RKNWTDIKLN (111 aa)) are esterase domain-1. Catalysis depends on Ser-58, which acts as the Nucleophile. N-linked (GlcNAc...) asparagine; by host glycosylation is present at Asn-131. An N-acetyl-9-O-acetylneuraminic acid binding region spans residues 138-297 (NFQKNIYELA…VRSSPRFLLM (160 aa)). Positions 298–352 (PERSYCFDMKEKGLVTAVQSVWGKGRKSDYAVDQACLSTPGCMLIQKQKPYIGEA) are esterase domain-2. Residues Asp-353 and His-356 each act as charge relay system in the active site. Residues 353 to 638 (DDHHGDQEMR…AALAISGIAI (286 aa)) are fusion domain-2. Residue Asn-382 is glycosylated (N-linked (GlcNAc...) asparagine; by host). The chain crosses the membrane as a helical span at residues 618 to 638 (LGLAITTPISLAALAISGIAI). Over 639–642 (CRTK) the chain is Cytoplasmic.

This sequence belongs to the influenza type C/coronaviruses hemagglutinin-esterase family. In terms of assembly, homotrimer of disulfide-linked HEF1-HEF2. In natural infection, inactive HEF is matured into HEF1 and HEF2 outside the cell by one or more trypsin-like, arginine-specific endoprotease.

The protein resides in the virion membrane. It is found in the host cell membrane. The catalysed reaction is N-acetyl-9-O-acetylneuraminate + H2O = N-acetylneuraminate + acetate + H(+). It carries out the reaction N-acetyl-4-O-acetylneuraminate + H2O = N-acetylneuraminate + acetate + H(+). In terms of biological role, binds to the N-acetyl-9-O-acetylneuraminic acid residues on the cell surface, bringing about the attachment of the virus particle to the cell. Plays a major role in the determination of host range restriction and virulence. Class I viral fusion protein. Responsible for penetration of the virus into the cell cytoplasm by mediating the fusion of the membrane of the endocytosed virus particle with the endosomal membrane. Low pH in endosomes induce an irreversible conformational change in HEF2, releasing the fusion hydrophobic peptide. Several trimers are required to form a competent fusion pore. Displays a receptor-destroying activity which is a neuraminidate-O-acetyl esterase. This activity cleaves off any receptor on the cell surface, which would otherwise prevent virions release. These cleavages prevent self-aggregation and ensure the efficient spread of the progeny virus from cell to cell. This is Hemagglutinin-esterase-fusion glycoprotein (HE) from Influenza C virus (strain C/Great lakes/1167/1954).